The sequence spans 90 residues: Antitoxin epsilon (90 aa).

It belongs to the epsilon antitoxin family. As to quaternary structure, in the presence of the zeta toxin, forms an inactive PezA(2)PezT(2) heterotetramer.

Antitoxin component of a type II toxin-antitoxin (TA) system. Neutralizes the toxic effect of cognate zeta toxin. Part of a postsegregational killing (PSK) system involved in the killing of plasmid-free cells. Continuous synthesis of the epsilon antitoxin is required to counteract the zeta toxin. The polypeptide is Antitoxin epsilon (Streptococcus agalactiae).